We begin with the raw amino-acid sequence, 582 residues long: Isopropyl malate synthase AMT7 (582 aa).

The Pyruvate carboxyltransferase domain occupies P61–D341.

This sequence belongs to the alpha-IPM synthase/homocitrate synthase family. LeuA type 2 subfamily.

The enzyme catalyses 3-methyl-2-oxobutanoate + acetyl-CoA + H2O = (2S)-2-isopropylmalate + CoA + H(+). It functions in the pathway mycotoxin biosynthesis. Functionally, isopropyl malate synthase; part of the gene clusters that mediate the biosynthesis of AM-toxins, host-selective toxins (HSTs) causing Alternaria blotch on apple, a worldwide distributed disease. AM-toxins are cyclic depsipeptides containing the 3 residues 2-hydroxy-isovaleric acid (2-HIV), dehydroalanine, L-alanine which are common for all 3 AM-toxins I to III. The fourth precursor is L-alpha-amino-methoxyphenyl-valeric acid (L-Amv) for AM-toxin I, L-alpha-amino-phenyl-valeric acid (L-Apv) for AM-toxin II, and L-alpha-amino-hydroxyphenyl-valeric acid (L-Ahv) for AM-toxin III. AM-toxins have two target sites for affecting susceptible apple cells; they cause invagination of the plasma membrane and electrolyte loss and chloroplast disorganization. The non-ribosomal peptide synthetase AMT1 contains 4 catalytic modules and is responsible for activation of each residue in AM-toxin. The aldo-keto reductase AMT2 catalyzes the conversion of 2-keto-isovaleric acid (2-KIV) to 2-hydroxy-isovaleric acid (2-HIV), one of the precursor residues incorporated by AMT1 during AM-toxin biosynthesis, by reduction of its ketone to an alcohol. The cytochrome P450 monooxygenase AMT3 and the thioesterase AMT4 are also important for AM-toxin production, but their exact function within the AM-toxin biosynthesis are not known yet. Up to 21 proteins (including AMT1 to AMT4) are predicted to be involved in AM-toxin biosynthesis since their expression ishighly up-regulated in AM-toxin-producing cultures. The protein is Isopropyl malate synthase AMT7 of Alternaria alternata (Alternaria rot fungus).